The chain runs to 157 residues: 6,7-dimethyl-8-ribityllumazine synthase 1 (157 aa).

Residues phenylalanine 22, 53-55, and 82-84 each bind 5-amino-6-(D-ribitylamino)uracil; these read ALE and TVI. 87–88 is a binding site for (2S)-2-hydroxy-3-oxobutyl phosphate; the sequence is ET. Histidine 90 (proton donor) is an active-site residue. Asparagine 115 lines the 5-amino-6-(D-ribitylamino)uracil pocket. Arginine 129 is a (2S)-2-hydroxy-3-oxobutyl phosphate binding site.

This sequence belongs to the DMRL synthase family.

It catalyses the reaction (2S)-2-hydroxy-3-oxobutyl phosphate + 5-amino-6-(D-ribitylamino)uracil = 6,7-dimethyl-8-(1-D-ribityl)lumazine + phosphate + 2 H2O + H(+). Its pathway is cofactor biosynthesis; riboflavin biosynthesis; riboflavin from 2-hydroxy-3-oxobutyl phosphate and 5-amino-6-(D-ribitylamino)uracil: step 1/2. Functionally, catalyzes the formation of 6,7-dimethyl-8-ribityllumazine by condensation of 5-amino-6-(D-ribitylamino)uracil with 3,4-dihydroxy-2-butanone 4-phosphate. This is the penultimate step in the biosynthesis of riboflavin. The polypeptide is 6,7-dimethyl-8-ribityllumazine synthase 1 (Brucella suis biovar 1 (strain 1330)).